The chain runs to 247 residues: Segregation and condensation protein A (247 aa).

The protein belongs to the ScpA family. As to quaternary structure, component of a cohesin-like complex composed of ScpA, ScpB and the Smc homodimer, in which ScpA and ScpB bind to the head domain of Smc. The presence of the three proteins is required for the association of the complex with DNA.

Its subcellular location is the cytoplasm. In terms of biological role, participates in chromosomal partition during cell division. May act via the formation of a condensin-like complex containing Smc and ScpB that pull DNA away from mid-cell into both cell halves. This chain is Segregation and condensation protein A, found in Bacillus anthracis (strain A0248).